Consider the following 147-residue polypeptide: MVALIQRVKESWVKIDGTEIAKIGKGYNILLGVMKEDTTKDIEKLIKKIVKLRLFPNESGKMDKNILEVKGSVLVVSQFTLAGNAKKGNRPDFTAAMPPKEAKELYDHFCQKLSLHLPVQTGLFGAMMEVGIINDGPVTLILDSKKL.

A Gly-cisPro motif, important for rejection of L-amino acids motif is present at residues 136-137 (GP).

This sequence belongs to the DTD family. Homodimer.

The protein localises to the cytoplasm. It catalyses the reaction glycyl-tRNA(Ala) + H2O = tRNA(Ala) + glycine + H(+). The enzyme catalyses a D-aminoacyl-tRNA + H2O = a tRNA + a D-alpha-amino acid + H(+). An aminoacyl-tRNA editing enzyme that deacylates mischarged D-aminoacyl-tRNAs. Also deacylates mischarged glycyl-tRNA(Ala), protecting cells against glycine mischarging by AlaRS. Acts via tRNA-based rather than protein-based catalysis; rejects L-amino acids rather than detecting D-amino acids in the active site. By recycling D-aminoacyl-tRNA to D-amino acids and free tRNA molecules, this enzyme counteracts the toxicity associated with the formation of D-aminoacyl-tRNA entities in vivo and helps enforce protein L-homochirality. The chain is D-aminoacyl-tRNA deacylase from Nitratiruptor sp. (strain SB155-2).